The chain runs to 199 residues: V-type proton ATPase subunit E (199 aa).

It belongs to the V-ATPase E subunit family.

Functionally, produces ATP from ADP in the presence of a proton gradient across the membrane. In Clostridium botulinum (strain Okra / Type B1), this protein is V-type proton ATPase subunit E.